The following is a 103-amino-acid chain: Pyrimidine/purine nucleoside phosphorylase (103 aa).

The protein belongs to the nucleoside phosphorylase PpnP family.

It carries out the reaction a purine D-ribonucleoside + phosphate = a purine nucleobase + alpha-D-ribose 1-phosphate. It catalyses the reaction adenosine + phosphate = alpha-D-ribose 1-phosphate + adenine. The catalysed reaction is cytidine + phosphate = cytosine + alpha-D-ribose 1-phosphate. The enzyme catalyses guanosine + phosphate = alpha-D-ribose 1-phosphate + guanine. It carries out the reaction inosine + phosphate = alpha-D-ribose 1-phosphate + hypoxanthine. It catalyses the reaction thymidine + phosphate = 2-deoxy-alpha-D-ribose 1-phosphate + thymine. The catalysed reaction is uridine + phosphate = alpha-D-ribose 1-phosphate + uracil. The enzyme catalyses xanthosine + phosphate = alpha-D-ribose 1-phosphate + xanthine. Catalyzes the phosphorolysis of diverse nucleosides, yielding D-ribose 1-phosphate and the respective free bases. Can use uridine, adenosine, guanosine, cytidine, thymidine, inosine and xanthosine as substrates. Also catalyzes the reverse reactions. The polypeptide is Pyrimidine/purine nucleoside phosphorylase (Sulfurovum sp. (strain NBC37-1)).